Consider the following 150-residue polypeptide: Ribosomal RNA large subunit methyltransferase H (150 aa).

S-adenosyl-L-methionine-binding positions include alanine 100 and 118 to 123 (LSEMTF).

Belongs to the RNA methyltransferase RlmH family. In terms of assembly, homodimer.

Its subcellular location is the cytoplasm. It catalyses the reaction pseudouridine(1915) in 23S rRNA + S-adenosyl-L-methionine = N(3)-methylpseudouridine(1915) in 23S rRNA + S-adenosyl-L-homocysteine + H(+). Specifically methylates the pseudouridine at position 1915 (m3Psi1915) in 23S rRNA. In Helicobacter pylori (strain ATCC 700392 / 26695) (Campylobacter pylori), this protein is Ribosomal RNA large subunit methyltransferase H.